Here is a 393-residue protein sequence, read N- to C-terminus: MTTMGTPLTPNATKVMMLGSGELGKEVVIELQRLGVEVIAVDRYANAPAQQVAHRAYTISMLDDDALRAVVEQEKPDFIVPEVEAIATETLVELEQKGYQVVPTAKATQLTMNREGIRRLAAEELGLPTSPYRFVDNFADFQQAVLAVGVPCVVKPIMSSSGHGQSIIKSLDQIQQAWDYSQAGGRAGGGRVIVEGFIKFDYEITLLTVRHINGTSFLAPIGHRQQNGDYRESWQPQAMSEVALQKAQQIAERITTALGGRGIFGVELFVCGDDIIFNEVSPRPHDTGMVTMASQELSQFALHARAILGLPIPHIEQFGPAASKAIVVEGKSNNVMFVGLDKVLEERGTHIRLFGKAEVNGHRRLGVILARDESTDKALAKVERAYANLTVKL.

Residues 22–23 (EL) and glutamate 82 each bind N(1)-(5-phospho-beta-D-ribosyl)glycinamide. Residues arginine 114, lysine 155, 160-165 (SSGHGQ), 195-198 (EGFI), and glutamate 203 each bind ATP. The ATP-grasp domain occupies 119-308 (RLAAEELGLP…QFALHARAIL (190 aa)). The Mg(2+) site is built by glutamate 267 and glutamate 279. Residues aspartate 286, lysine 356, and 363-364 (RR) each bind N(1)-(5-phospho-beta-D-ribosyl)glycinamide.

Belongs to the PurK/PurT family. In terms of assembly, homodimer.

It carries out the reaction N(1)-(5-phospho-beta-D-ribosyl)glycinamide + formate + ATP = N(2)-formyl-N(1)-(5-phospho-beta-D-ribosyl)glycinamide + ADP + phosphate + H(+). Its pathway is purine metabolism; IMP biosynthesis via de novo pathway; N(2)-formyl-N(1)-(5-phospho-D-ribosyl)glycinamide from N(1)-(5-phospho-D-ribosyl)glycinamide (formate route): step 1/1. In terms of biological role, involved in the de novo purine biosynthesis. Catalyzes the transfer of formate to 5-phospho-ribosyl-glycinamide (GAR), producing 5-phospho-ribosyl-N-formylglycinamide (FGAR). Formate is provided by PurU via hydrolysis of 10-formyl-tetrahydrofolate. In Haemophilus ducreyi (strain 35000HP / ATCC 700724), this protein is Formate-dependent phosphoribosylglycinamide formyltransferase.